The chain runs to 108 residues: uncharacterized protein (108 aa).

The chain crosses the membrane as a helical span at residues 72–94 (LGLHTSVFFFLRIVCMSSAASVF).

It is found in the membrane. This is an uncharacterized protein from Saccharomyces cerevisiae (strain ATCC 204508 / S288c) (Baker's yeast).